The sequence spans 66 residues: Large ribosomal subunit protein bL35 (66 aa).

Residues methionine 1 to histidine 26 are compositionally biased toward basic residues. The interval methionine 1 to threonine 29 is disordered.

This sequence belongs to the bacterial ribosomal protein bL35 family.

The polypeptide is Large ribosomal subunit protein bL35 (Geobacillus kaustophilus (strain HTA426)).